The following is a 561-amino-acid chain: SUN domain-containing protein 5 (561 aa).

A helical transmembrane segment spans residues 36–56; that stretch reads GSFFERSISLVLLLWCFLFLV. The region spanning 158-318 is the SUN domain; sequence NGSSQLVNNG…SVVEVFGIDA (161 aa). Positions 345-367 are disordered; it reads ADEKQDGEIKSNRTDQIGKETEA. A coiled-coil region spans residues 454 to 499; the sequence is MEKELRDLELWKTLVASRVESLARGNSALRLDVEKIVKEQANLESK. 2 consecutive transmembrane segments (helical) span residues 501-521 and 540-560; these read LGVLLISLFFVVLATIRLVST and PDSGWVMILLSSSIMIFIHLL.

Forms homomers. Interacts with SUN3 and TIK.

It is found in the membrane. In terms of biological role, encodes a member of the mid-SUN subfamily of SUN-domain proteins. It is involved in early seed development and nuclear morphology. [TAIR]. This Arabidopsis thaliana (Mouse-ear cress) protein is SUN domain-containing protein 5.